The chain runs to 161 residues: Cystatin cpi-2 (161 aa).

An N-terminal signal peptide occupies residues 1–25; that stretch reads MMSTMSIKEGLLVILLSLFLFDTTA. Positions 76 to 78 match the Important for interaction with host LGMN motif; the sequence is SND. Asn89 carries an N-linked (GlcNAc...) asparagine glycan. A Secondary area of contact motif is present at residues 93 to 97; the sequence is QVVAG. A disulfide bridge links Cys111 with Cys124.

This sequence belongs to the cystatin family.

In terms of biological role, cysteine protease inhibitor which inhibits members of the peptidase C1 family. Also acts as an asparaginyl endopeptidase inhibitor. In the human host, inhibits CTSL/cathepsin L, CTSS/cathepsin S, CTSB/cathepsin B and asparaginyl endopeptidase LGMN/AEP which may cause defects in both antigen and MHC class II invariant chain CD74/Ii processing. This Brugia malayi (Filarial nematode worm) protein is Cystatin cpi-2.